Reading from the N-terminus, the 343-residue chain is Probable dual-specificity RNA methyltransferase RlmN (343 aa).

Residue E91 is the Proton acceptor of the active site. Residues 97 to 326 (HPDRITACIS…AEIRREKGTD (230 aa)) form the Radical SAM core domain. C104 and C331 form a disulfide bridge. The [4Fe-4S] cluster site is built by C111, C115, and C118. S-adenosyl-L-methionine contacts are provided by residues 158–159 (GE), S190, 213–215 (SLH), and N289. Residue C331 is the S-methylcysteine intermediate of the active site.

Belongs to the radical SAM superfamily. RlmN family. It depends on [4Fe-4S] cluster as a cofactor.

Its subcellular location is the cytoplasm. The catalysed reaction is adenosine(2503) in 23S rRNA + 2 reduced [2Fe-2S]-[ferredoxin] + 2 S-adenosyl-L-methionine = 2-methyladenosine(2503) in 23S rRNA + 5'-deoxyadenosine + L-methionine + 2 oxidized [2Fe-2S]-[ferredoxin] + S-adenosyl-L-homocysteine. It catalyses the reaction adenosine(37) in tRNA + 2 reduced [2Fe-2S]-[ferredoxin] + 2 S-adenosyl-L-methionine = 2-methyladenosine(37) in tRNA + 5'-deoxyadenosine + L-methionine + 2 oxidized [2Fe-2S]-[ferredoxin] + S-adenosyl-L-homocysteine. Specifically methylates position 2 of adenine 2503 in 23S rRNA and position 2 of adenine 37 in tRNAs. The polypeptide is Probable dual-specificity RNA methyltransferase RlmN (Thermotoga maritima (strain ATCC 43589 / DSM 3109 / JCM 10099 / NBRC 100826 / MSB8)).